A 179-amino-acid chain; its full sequence is Large ribosomal subunit protein uL6 (179 aa).

It belongs to the universal ribosomal protein uL6 family. As to quaternary structure, part of the 50S ribosomal subunit.

Its function is as follows. This protein binds to the 23S rRNA, and is important in its secondary structure. It is located near the subunit interface in the base of the L7/L12 stalk, and near the tRNA binding site of the peptidyltransferase center. In Beutenbergia cavernae (strain ATCC BAA-8 / DSM 12333 / CCUG 43141 / JCM 11478 / NBRC 16432 / NCIMB 13614 / HKI 0122), this protein is Large ribosomal subunit protein uL6.